A 120-amino-acid chain; its full sequence is Large ribosomal subunit protein eL8 (120 aa).

This sequence belongs to the eukaryotic ribosomal protein eL8 family. Part of the 50S ribosomal subunit. Probably part of the RNase P complex.

The protein localises to the cytoplasm. Multifunctional RNA-binding protein that recognizes the K-turn motif in ribosomal RNA, the RNA component of RNase P, box H/ACA, box C/D and box C'/D' sRNAs. The sequence is that of Large ribosomal subunit protein eL8 from Natronomonas pharaonis (strain ATCC 35678 / DSM 2160 / CIP 103997 / JCM 8858 / NBRC 14720 / NCIMB 2260 / Gabara) (Halobacterium pharaonis).